The primary structure comprises 353 residues: UPF0283 membrane protein YcjF (353 aa).

The span at 1-19 shows a compositional bias: basic and acidic residues; it reads MSEPLKPRIDFAEPLKEEP. The tract at residues 1–35 is disordered; it reads MSEPLKPRIDFAEPLKEEPTSAFKAQQTFSEAESR. Helical transmembrane passes span 70-90, 100-120, and 213-233; these read MVMG…VQWT, VALG…GSVV, and ESTL…FIAW.

This sequence belongs to the UPF0283 family.

The protein localises to the cell inner membrane. The polypeptide is UPF0283 membrane protein YcjF (Salmonella newport (strain SL254)).